The following is a 483-amino-acid chain: MSECSTATDLARAVQARETTPQALLEAARRRAEAARDLNALISLNDRADEQAARVQVRLDAGETLPLAGVPIVVKDNLNVIGTRTTCGSRILANYVSPYDATAVERLTGAGAVIIGKANMDEFAMGSSTESSAWGPTLNPWDRERVPGGSSGGSAVAVAANLTPVALGSDTGGSVRQPAAFTGIYGLKPTYGRVSRYGLVAYASSLDQIGPFARSAADLALLMNVLAGHDPRDATSLDAPPAFRPGTPDDLQGLRVGVIREALEGNTPGVEAALNATLDALRGAGATVREVSVPSVQHAIAAYYLIATPEASSNLARYDGMVYGERVSAPDAVSSMTLTREQGFGREVKRRIMLGTYALSSGYYDAYYSKAMKVRRLIAQDFARAFGNVDVLVTPTSPFPAFRRGEKTQDPLAMYAADVDTVAINLAGLPALSVPAGFERVDGVRLPVGVQLIAPPLQDERLVALAGGLEGIGAVRMEVAPAS.

Active-site charge relay system residues include Lys75 and Ser150. Ser174 functions as the Acyl-ester intermediate in the catalytic mechanism.

Belongs to the amidase family. GatA subfamily. Heterotrimer of A, B and C subunits.

It carries out the reaction L-glutamyl-tRNA(Gln) + L-glutamine + ATP + H2O = L-glutaminyl-tRNA(Gln) + L-glutamate + ADP + phosphate + H(+). In terms of biological role, allows the formation of correctly charged Gln-tRNA(Gln) through the transamidation of misacylated Glu-tRNA(Gln) in organisms which lack glutaminyl-tRNA synthetase. The reaction takes place in the presence of glutamine and ATP through an activated gamma-phospho-Glu-tRNA(Gln). This chain is Glutamyl-tRNA(Gln) amidotransferase subunit A, found in Deinococcus geothermalis (strain DSM 11300 / CIP 105573 / AG-3a).